Consider the following 717-residue polypeptide: P-loop NTPase domain-containing protein LPA1 homolog 2 (717 aa).

2 disordered regions span residues 235–259 (KKLK…SSTT) and 532–629 (HYSS…DTIS). Polar residues-rich tracts occupy residues 243–259 (VNSN…SSTT) and 532–545 (HYSS…TSDG). The segment covering 559–582 (SDEDDEEGDDDFHEPDSDEDLSDN) has biased composition (acidic residues). The span at 583–602 (NDERNRDEIGSVDEESTKSD) shows a compositional bias: basic and acidic residues.

May be not required for the accumulation of phytic acid in seeds. Phytic acid is the primary storage form of phosphorus in cereal grains and other plant seeds. In Arabidopsis thaliana (Mouse-ear cress), this protein is P-loop NTPase domain-containing protein LPA1 homolog 2.